The chain runs to 847 residues: Acyl-homoserine lactone acylase QuiP (847 aa).

The N-terminal stretch at 1-26 is a signal peptide; the sequence is MASPAFMRFLPRCGAAAAFGTLLGLA. Ser-265 (nucleophile) is an active-site residue.

This sequence belongs to the peptidase S45 family. Heterodimer of an alpha subunit and a beta subunit processed from the same precursor.

The protein localises to the periplasm. It catalyses the reaction an N-acyl-L-homoserine lactone + H2O = L-homoserine lactone + a carboxylate. Functionally, catalyzes the deacylation of acyl-homoserine lactone (AHL or acyl-HSL), releasing homoserine lactone (HSL) and the corresponding fatty acid. Possesses a specificity for the degradation of long-chain acyl-HSLs (side chains of seven or more carbons in length). Appears to be the acyl-HSL acylase that underlies the ability of P.aeruginosa to degrade and utilize certain acyl-HSLs as growth nutrients, including one of its own quorum signals, 3-oxo-C12-HSL. Is thought to have a role in quorum quenching. The protein is Acyl-homoserine lactone acylase QuiP (quiP) of Pseudomonas aeruginosa (strain ATCC 15692 / DSM 22644 / CIP 104116 / JCM 14847 / LMG 12228 / 1C / PRS 101 / PAO1).